The sequence spans 139 residues: S-adenosylmethionine decarboxylase proenzyme (139 aa).

Serine 63 serves as the catalytic Schiff-base intermediate with substrate; via pyruvic acid. At serine 63 the chain carries Pyruvic acid (Ser); by autocatalysis. Histidine 68 functions as the Proton acceptor; for processing activity in the catalytic mechanism. Cysteine 83 serves as the catalytic Proton donor; for catalytic activity.

It belongs to the prokaryotic AdoMetDC family. Type 1 subfamily. As to quaternary structure, heterotetramer of two alpha and two beta chains arranged as a dimer of alpha/beta heterodimers. Requires pyruvate as cofactor. Post-translationally, is synthesized initially as an inactive proenzyme. Formation of the active enzyme involves a self-maturation process in which the active site pyruvoyl group is generated from an internal serine residue via an autocatalytic post-translational modification. Two non-identical subunits are generated from the proenzyme in this reaction, and the pyruvate is formed at the N-terminus of the alpha chain, which is derived from the carboxyl end of the proenzyme. The post-translation cleavage follows an unusual pathway, termed non-hydrolytic serinolysis, in which the side chain hydroxyl group of the serine supplies its oxygen atom to form the C-terminus of the beta chain, while the remainder of the serine residue undergoes an oxidative deamination to produce ammonia and the pyruvoyl group blocking the N-terminus of the alpha chain.

The catalysed reaction is S-adenosyl-L-methionine + H(+) = S-adenosyl 3-(methylsulfanyl)propylamine + CO2. It participates in amine and polyamine biosynthesis; S-adenosylmethioninamine biosynthesis; S-adenosylmethioninamine from S-adenosyl-L-methionine: step 1/1. Catalyzes the decarboxylation of S-adenosylmethionine to S-adenosylmethioninamine (dcAdoMet), the propylamine donor required for the synthesis of the polyamines spermine and spermidine from the diamine putrescine. This chain is S-adenosylmethionine decarboxylase proenzyme, found in Pyrococcus horikoshii (strain ATCC 700860 / DSM 12428 / JCM 9974 / NBRC 100139 / OT-3).